The following is a 327-amino-acid chain: Porphobilinogen deaminase (327 aa).

The residue at position 251 (Cys-251) is an S-(dipyrrolylmethanemethyl)cysteine.

It belongs to the HMBS family. It depends on dipyrromethane as a cofactor.

The catalysed reaction is 4 porphobilinogen + H2O = hydroxymethylbilane + 4 NH4(+). Its pathway is porphyrin-containing compound metabolism; protoporphyrin-IX biosynthesis; coproporphyrinogen-III from 5-aminolevulinate: step 2/4. Catalyzes the tetrapolymerization of the monopyrrole porphobilinogen (PBG) into the hydroxymethylbilane pre-uroporphyrinogen in several discrete steps. The protein is Porphobilinogen deaminase (HEM3) of Saccharomyces cerevisiae (strain ATCC 204508 / S288c) (Baker's yeast).